The primary structure comprises 148 residues: Suppressor APC domain-containing protein 1 (148 aa).

Residues 120–148 form a disordered region; it reads SRQQKGVTQPKEEMAQRGCTKGPRGPTRV.

In Homo sapiens (Human), this protein is Suppressor APC domain-containing protein 1 (SAPCD1).